Here is a 463-residue protein sequence, read N- to C-terminus: MKFPESLKGLKILVLGGGISGNSALNFLISEKAQPILCDRNQPERTVVPFFPDNIPPQSLPEVSLVIKSPGILPTHPILSYAADKKIPVVSEIDLGRYFFKGKIIGITGTDGKSTTTSLIAHLLKESFPDLKEGGNLGIPFTSFCKESISLAVLELSSYQLEDSSPLHLDVSVFLNLASDHLERHKTMENYFQAKLKIADLSNSNHTLIVSEKIKERILNSISYQCKLLSFGKTSDSNAFLDENSLKIKTSKFVYDISKFYLPGTHNRENLAASILAAEEIGGKPESIQTRIPLFRGLPHRFQIAGEKLGISFINDSKSTNLHSMLAGMATWKNIDQTCLILGGRPKQEDLKPLYNFLIKGIGCVVLFGEARATWESGIKNIIGEKLYCVENLNDTFEIFKKGNIFPVPGLNKDIIIRLSDSISISSFVFSPACASFDQYKNFEERGNHFLSLVNDFLDQIDS.

Glycine 109–threonine 115 contacts ATP.

Belongs to the MurCDEF family.

Its subcellular location is the cytoplasm. It carries out the reaction UDP-N-acetyl-alpha-D-muramoyl-L-alanine + D-glutamate + ATP = UDP-N-acetyl-alpha-D-muramoyl-L-alanyl-D-glutamate + ADP + phosphate + H(+). It participates in cell wall biogenesis; peptidoglycan biosynthesis. Functionally, cell wall formation. Catalyzes the addition of glutamate to the nucleotide precursor UDP-N-acetylmuramoyl-L-alanine (UMA). The polypeptide is UDP-N-acetylmuramoylalanine--D-glutamate ligase (Leptospira interrogans serogroup Icterohaemorrhagiae serovar copenhageni (strain Fiocruz L1-130)).